The sequence spans 374 residues: Low-specificity L-threonine aldolase (374 aa).

Lys213 is modified (N6-(pyridoxal phosphate)lysine). Positions 354–374 are disordered; it reads HPHKDDGRNNKKMYSLDAIKK.

This sequence belongs to the threonine aldolase family. In terms of assembly, homotetramer. Pyridoxal 5'-phosphate serves as cofactor.

The enzyme catalyses L-threonine = acetaldehyde + glycine. It carries out the reaction L-allo-threonine = acetaldehyde + glycine. The protein operates within amino-acid degradation; L-threonine degradation via aldolase pathway; acetaldehyde and glycine from L-threonine: step 1/1. The chain is Low-specificity L-threonine aldolase (GLY1) from Candida albicans (Yeast).